The chain runs to 73 residues: UPF0435 protein OB1527 (73 aa).

It belongs to the UPF0435 family.

The chain is UPF0435 protein OB1527 from Oceanobacillus iheyensis (strain DSM 14371 / CIP 107618 / JCM 11309 / KCTC 3954 / HTE831).